We begin with the raw amino-acid sequence, 542 residues long: MILALLLLCSTITQFSDGYVIGGGTQPGGNQNNPNSPTYNGGIGGGVYPGGGGNNGGVQRDEGGYCNSNTDCRSGLYCTASVNGVKICLSTSNGGGGNGFPSGNGGCQTSSNCQYGSVCVVTNGQGNCQIQTGGYVSPARQGMVRYPSSNSITVDFNEDVFSKNAPEPGKINSGCERDADCDDELSCTMYFGEMMCRSPIKPLIPLRCESDAECPSTEYLCVFSTAMQDRVCYKYGDVVTDGYVIPIKHKISMELKKSTTTSSPPITTTHLSKPEESNGLFAESEAIFEQPGSLLTSALQKRADKMSQNGPTPPMYVKMSDIPSEHVIAGQHDGEAVRITKVVVKEEKEMEENGETREKVIPKIGEGVGMVDDEPIDPMATVCQFDYHCRMGESCSGRVRFVDRNVTVCRYDMFKKHRQCLYHSDCISGQRCTPTGRDIATCETDISATIGSIQCFYDYECSGGEKCTLVDEKERKFVCRPSPTSDPRMNQICTTNSQCPFQQVCRQSGGVSLCVDVSIARNPALLHERLWRFLRNFILRTL.

The segment at 256-275 is disordered; it reads KKSTTTSSPPITTTHLSKPE. The span at 258–269 shows a compositional bias: low complexity; that stretch reads STTTSSPPITTT.

This is an uncharacterized protein from Caenorhabditis elegans.